We begin with the raw amino-acid sequence, 130 residues long: Small ribosomal subunit protein uS8 (130 aa).

The protein belongs to the universal ribosomal protein uS8 family. In terms of assembly, part of the 30S ribosomal subunit. Contacts proteins S5 and S12.

Its function is as follows. One of the primary rRNA binding proteins, it binds directly to 16S rRNA central domain where it helps coordinate assembly of the platform of the 30S subunit. This Yersinia enterocolitica serotype O:8 / biotype 1B (strain NCTC 13174 / 8081) protein is Small ribosomal subunit protein uS8.